The following is a 62-amino-acid chain: uncharacterized protein (62 aa).

The first 19 residues, 1–19 (MKLIILLFVVAAFVTLAMG), serve as a signal peptide directing secretion.

This is an uncharacterized protein from Lepidoptera (butterflies and moths).